We begin with the raw amino-acid sequence, 386 residues long: O-methyltransferase 12 (386 aa).

S-adenosyl-L-homocysteine-binding residues include serine 207, glycine 231, aspartate 254, aspartate 274, and lysine 288. Aspartate 254 is an S-adenosyl-L-methionine binding site. The active-site Proton acceptor is the histidine 292.

Belongs to the class I-like SAM-binding methyltransferase superfamily. Cation-independent O-methyltransferase family. As to quaternary structure, homodimer. Expressed at high levels in all tissues.

The enzyme catalyses 4-hydroxy-3,5-dimethoxyphenethylamine + S-adenosyl-L-methionine = mescaline + S-adenosyl-L-homocysteine + H(+). It carries out the reaction dopamine + S-adenosyl-L-methionine = 4-methoxytyramine + S-adenosyl-L-homocysteine + H(+). The protein operates within aromatic compound metabolism. It functions in the pathway alkaloid biosynthesis. In terms of biological role, O-methyltransferase participating in the biosynthesis of natural products derived from phenylethylamine, including mescaline, a natural hallucinogen potentially used in psychotherapeutic treatments. Catalyzes the O-methylation of dopamine, 4-hydroxy-3,5-dimethoxyphenethylamine, 4,5-dihydroxy-3-methoxyphenethylamine and N-methyl-4,5-dihydroxy-3-methoxyphenethylamine. Also involved in the conversion of N-methyl-4-hydroxy-3,5-dimethoxyphenethylamine to N-methylmescaline. This is O-methyltransferase 12 from Lophophora williamsii (Peyote).